The sequence spans 198 residues: Recombination protein RecR (198 aa).

The segment at Cys-57–Cys-72 adopts a C4-type zinc-finger fold. The region spanning Ser-80 to Pro-175 is the Toprim domain.

This sequence belongs to the RecR family.

Its function is as follows. May play a role in DNA repair. It seems to be involved in an RecBC-independent recombinational process of DNA repair. It may act with RecF and RecO. This is Recombination protein RecR from Bacillus velezensis (strain DSM 23117 / BGSC 10A6 / LMG 26770 / FZB42) (Bacillus amyloliquefaciens subsp. plantarum).